The chain runs to 68 residues: Large ribosomal subunit protein bL33c (68 aa).

This sequence belongs to the bacterial ribosomal protein bL33 family.

It is found in the plastid. The protein resides in the chloroplast. The polypeptide is Large ribosomal subunit protein bL33c (Piper cenocladum (Ant piper)).